Reading from the N-terminus, the 396-residue chain is Gap junction gamma-1 protein (396 aa).

Residues Met1–Lys22 are Cytoplasmic-facing. Residues Ile23–Tyr45 traverse the membrane as a helical segment. Topologically, residues Asp46–Arg75 are extracellular. A helical membrane pass occupies residues Phe76–Ala95. Residues Ile96–Lys175 lie on the Cytoplasmic side of the membrane. Residues Glu145–Arg165 are disordered. Over residues Glu147–Asn156 the composition is skewed to basic and acidic residues. The chain crosses the membrane as a helical span at residues Ile176 to Leu198. The Extracellular segment spans residues Tyr199–Lys228. Residues Thr229–Trp248 traverse the membrane as a helical segment. The Cytoplasmic portion of the chain corresponds to Glu249 to Ile396. Residues Ala355–Ile396 form a disordered region. Positions Gly373–Ile396 are enriched in low complexity.

Belongs to the connexin family. Gamma-type subfamily. A connexon is composed of a hexamer of connexins. Interacts with CNST.

The protein localises to the cell membrane. The protein resides in the cell junction. Its subcellular location is the gap junction. Its function is as follows. One gap junction consists of a cluster of closely packed pairs of transmembrane channels, the connexons, through which materials of low MW diffuse from one cell to a neighboring cell. The chain is Gap junction gamma-1 protein (GJC1) from Canis lupus familiaris (Dog).